Here is a 132-residue protein sequence, read N- to C-terminus: Protein NrdI (132 aa).

The protein belongs to the NrdI family.

Functionally, probably involved in ribonucleotide reductase function. This chain is Protein NrdI, found in Bartonella quintana (strain Toulouse) (Rochalimaea quintana).